Here is a 2294-residue protein sequence, read N- to C-terminus: Reducing polyketide synthase BOA9 (2294 aa).

The 406-residue stretch at 4–409 (PEPVAIIGMG…GANATAIVEA (406 aa)) folds into the Ketosynthase family 3 (KS3) domain. The segment at 537–853 (IFTGQGAQNA…DYAATLVRGQ (317 aa)) is malonyl-CoA:ACP transacylase (MAT) domain. Catalysis depends on S630, which acts as the For malonyltransferase activity. Residues 930–1067 (HDLLGAILPG…GTVTKKKAVT (138 aa)) form an N-terminal hotdog fold region. A dehydratase (DH) domain region spans residues 930-1104 (HDLLGAILPG…LNYGPAFNGL (175 aa)). One can recognise a PKS/mFAS DH domain in the interval 930 to 1236 (HDLLGAILPG…CTQYSEALDD (307 aa)). H962 serves as the catalytic Proton acceptor; for dehydratase activity. Positions 1078–1236 (QEPKAARTWY…CTQYSEALDD (159 aa)) are C-terminal hotdog fold. D1142 serves as the catalytic Proton donor; for dehydratase activity. Residues 1618–1908 (GIFDTIHFKD…KNSRIGRVVV (291 aa)) form an enoyl reductase (ER) domain region. The ketoreductase (KR) domain stretch occupies residues 1934–2107 (VHTYLLGVLE…LPATTISLTV (174 aa)). Positions 2214-2292 (LLLPDILEMI…SLAKKIYDIR (79 aa)) constitute a Carrier domain. S2251 carries the post-translational modification O-(pantetheine 4'-phosphoryl)serine.

It participates in polyketide biosynthesis. In terms of biological role, reducing polyketide synthase; part of the gene cluster B that mediates the biosynthesis of botcinic acid and its botcinin derivatives, acetate-derived polyketides that contribute to virulence when combined with the sesquiterpene botrydial. Botcinic acid and its derivatives have been shown to induce chlorosis and necrosis during host plant infection, but also have antifungal activities. Two polyketide synthases, BOA6 and BOA9, are involved in the biosynthesis of botcinins. BOA6 mediates the formation of the per-methylated tetraketide core by condensation of four units of malonyl-CoA with one unit of acetyl-CoA, which would be methylated in activated methylene groups to yield a bicyclic acid intermediate that could then either be converted to botrylactone derivatives or lose the starter acetate unit through a retro-Claisen type C-C bond cleavage to yield botcinin derivatives. The second polyketide synthase, BOA9, is probably required for the biosynthesis of the tetraketide side chain of botcinins. The methyltransferase (MT) domain within BOA6 is probably responsible for the incorporation of four methyl groups. The trans-enoyl reductase BOA5 might take over the enoyl reductase function of BOA6 that misses an ER domain. The monooxygenases BOA2, BOA3 and BOA4 might be involved in further hydroxylations at C4, C5 and C8, whereas BOA7, close to BOA9, could potentially be involved in the hydroxylation at C4 in the side chain of botcinins. The sequence is that of Reducing polyketide synthase BOA9 from Botryotinia fuckeliana (strain B05.10) (Noble rot fungus).